The following is a 374-amino-acid chain: Chorismate synthase (374 aa).

R55 provides a ligand contact to NADP(+). FMN-binding positions include 132-134, G293, 308-312, and R335; these read RGS and KPTPS.

The protein belongs to the chorismate synthase family. FMNH2 serves as cofactor.

The enzyme catalyses 5-O-(1-carboxyvinyl)-3-phosphoshikimate = chorismate + phosphate. The protein operates within metabolic intermediate biosynthesis; chorismate biosynthesis; chorismate from D-erythrose 4-phosphate and phosphoenolpyruvate: step 7/7. Its function is as follows. Catalyzes the anti-1,4-elimination of the C-3 phosphate and the C-6 proR hydrogen from 5-enolpyruvylshikimate-3-phosphate (EPSP) to yield chorismate, which is the branch point compound that serves as the starting substrate for the three terminal pathways of aromatic amino acid biosynthesis. This reaction introduces a second double bond into the aromatic ring system. This Methanothermobacter thermautotrophicus (strain ATCC 29096 / DSM 1053 / JCM 10044 / NBRC 100330 / Delta H) (Methanobacterium thermoautotrophicum) protein is Chorismate synthase.